Consider the following 39-residue polypeptide: Cytochrome b6-f complex subunit 5 (39 aa).

A helical membrane pass occupies residues 5–25 (LLCGIVLGLVPITLLGLFVSA).

The protein belongs to the PetG family. In terms of assembly, the 4 large subunits of the cytochrome b6-f complex are cytochrome b6, subunit IV (17 kDa polypeptide, PetD), cytochrome f and the Rieske protein, while the 4 small subunits are PetG, PetL, PetM and PetN. The complex functions as a dimer.

It localises to the cellular thylakoid membrane. Its function is as follows. Component of the cytochrome b6-f complex, which mediates electron transfer between photosystem II (PSII) and photosystem I (PSI), cyclic electron flow around PSI, and state transitions. PetG is required for either the stability or assembly of the cytochrome b6-f complex. The chain is Cytochrome b6-f complex subunit 5 from Prochlorococcus marinus subsp. pastoris (strain CCMP1986 / NIES-2087 / MED4).